The primary structure comprises 64 residues: Alpha-like toxin BmK M2 (64 aa).

The LCN-type CS-alpha/beta domain occupies Arg2–His64. 4 cysteine pairs are disulfide-bonded: Cys12–Cys63, Cys16–Cys36, Cys22–Cys46, and Cys26–Cys48.

Belongs to the long (4 C-C) scorpion toxin superfamily. Sodium channel inhibitor family. Alpha subfamily. Expressed by the venom gland.

The protein resides in the secreted. Functionally, alpha toxins bind voltage-independently at site-3 of sodium channels (Nav) and inhibit the inactivation of the activated channels, thereby blocking neuronal transmission. This toxin is active against both mammals and insects, and is classified as an alpha-like toxin. The polypeptide is Alpha-like toxin BmK M2 (Olivierus martensii (Manchurian scorpion)).